Here is a 45-residue protein sequence, read N- to C-terminus: Cytochrome b559 subunit beta (45 aa).

The helical transmembrane segment at 20 to 36 (WLALHTLGVPTVFFLGA) threads the bilayer. H24 provides a ligand contact to heme.

Belongs to the PsbE/PsbF family. As to quaternary structure, heterodimer of an alpha subunit and a beta subunit. PSII is composed of 1 copy each of membrane proteins PsbA, PsbB, PsbC, PsbD, PsbE, PsbF, PsbH, PsbI, PsbJ, PsbK, PsbL, PsbM, PsbT, PsbX, PsbY, PsbZ, Psb30/Ycf12, peripheral proteins PsbO, CyanoQ (PsbQ), PsbU, PsbV and a large number of cofactors. It forms dimeric complexes. Heme b is required as a cofactor.

It is found in the cellular thylakoid membrane. This b-type cytochrome is tightly associated with the reaction center of photosystem II (PSII). PSII is a light-driven water:plastoquinone oxidoreductase that uses light energy to abstract electrons from H(2)O, generating O(2) and a proton gradient subsequently used for ATP formation. It consists of a core antenna complex that captures photons, and an electron transfer chain that converts photonic excitation into a charge separation. This Parasynechococcus marenigrum (strain WH8102) protein is Cytochrome b559 subunit beta.